We begin with the raw amino-acid sequence, 462 residues long: A-type ATP synthase subunit B (462 aa).

It belongs to the ATPase alpha/beta chains family. Has multiple subunits with at least A(3), B(3), C, D, E, F, H, I and proteolipid K(x).

The protein localises to the cell membrane. In terms of biological role, component of the A-type ATP synthase that produces ATP from ADP in the presence of a proton gradient across the membrane. The B chain is a regulatory subunit. This is A-type ATP synthase subunit B from Methanococcus maripaludis (strain C7 / ATCC BAA-1331).